The sequence spans 76 residues: Bowman-Birk type proteinase inhibitor DE-3 (76 aa).

7 disulfides stabilise this stretch: Cys16/Cys70, Cys17/Cys32, Cys20/Cys66, Cys22/Cys30, Cys40/Cys47, Cys44/Cys59, and Cys49/Cys57.

Belongs to the Bowman-Birk serine protease inhibitor family.

The chain is Bowman-Birk type proteinase inhibitor DE-3 from Macrotyloma axillare (Perennial horse gram).